Consider the following 350-residue polypeptide: Vancomycin C-type resistance protein VanC2 (350 aa).

Active-site residues include Glu-14 and Ser-187. An ATP-grasp domain is found at 141-343 (HQAAAAIGVQ…YQELLQKLLV (203 aa)). 171-226 (IQTHGFPVFFKPNEAGSSKGITKVTCVEEIASALKEAFTYCSAVLLQKNIAGVEIG) contributes to the ATP binding site. Mg(2+)-binding residues include Asp-297, Glu-310, and Asn-312. Mn(2+) is bound by residues Asp-297, Glu-310, and Asn-312. The active site involves Ser-321.

This sequence belongs to the D-alanine--D-alanine ligase family. Homodimer. Requires Mg(2+) as cofactor. Mn(2+) is required as a cofactor.

The protein resides in the cell membrane. The catalysed reaction is D-serine + D-alanine + ATP = D-alanyl-D-serine + ADP + phosphate + H(+). It functions in the pathway cell wall biogenesis; peptidoglycan biosynthesis. With respect to regulation, inhibited by D-cycloserine. Its function is as follows. Required for low-level resistance to the glycopeptide antibiotic vancomycin. D-alanine--D-alanine ligase of altered specificity, which catalyzes synthesis of D-Ala-D-Ser; produces a peptidoglycan which does not terminate in D-alanine but in D-serine, thus probably reducing affinity for vancomycin. Only insignificant catalytic synthesis of D-Ala-D-Ala in vitro. This is Vancomycin C-type resistance protein VanC2 from Enterococcus casseliflavus (Enterococcus flavescens).